Consider the following 172-residue polypeptide: C-phycocyanin beta chain (172 aa).

Residue N72 is modified to N4-methylasparagine. Positions 82 and 153 each coordinate (2R,3E)-phycocyanobilin.

The protein belongs to the phycobiliprotein family. Heterodimer of an alpha and a beta subunit, which further assembles into trimers and the trimers into hexamers. The basic functional unit of phycobiliproteins is a ring-shaped hexamer formed from two back-to-back trimers contacting via the alpha chain subunits. The trimers are composed of alpha/beta subunit heterodimers arranged around a three-fold axis of symmetry. The phycoerythrins also contain a gamma subunit which is located in the center of the hexamer. Post-translationally, contains two covalently linked bilin chromophores.

The protein resides in the plastid. It localises to the chloroplast thylakoid membrane. Functionally, light-harvesting photosynthetic bile pigment-protein from the phycobiliprotein complex (phycobilisome, PBS). Phycocyanin is the major phycobiliprotein in the PBS rod. The polypeptide is C-phycocyanin beta chain (cpcB) (Aglaothamnion neglectum (Red alga)).